Consider the following 180-residue polypeptide: MSEPELKLVARRIRSFPDFPIPGVLFRDISPLLKDPDSFRASIRLLASHLKSTHSGKIDYIAGLDSRGFLFGPSLAQELGVGCVLIRKQGKLPGPTVSASYSLEYGKAELEIQKDALEPGQRVVIVDDLLATGGTMFAACDLLHQLRAEVVECVSLVELTSLKGRERLGPIPFFSLLQYD.

The residue at position 2 (Ser-2) is an N-acetylserine. Ser-15 and Ser-30 each carry phosphoserine. Tyr-60 is subject to Phosphotyrosine. Ser-66 is modified (phosphoserine). Lys-114 is subject to N6-acetyllysine. The residue at position 135 (Thr-135) is a Phosphothreonine.

Belongs to the purine/pyrimidine phosphoribosyltransferase family. In terms of assembly, homodimer.

It localises to the cytoplasm. The catalysed reaction is AMP + diphosphate = 5-phospho-alpha-D-ribose 1-diphosphate + adenine. The protein operates within purine metabolism; AMP biosynthesis via salvage pathway; AMP from adenine: step 1/1. Functionally, catalyzes a salvage reaction resulting in the formation of AMP, that is energically less costly than de novo synthesis. The chain is Adenine phosphoribosyltransferase from Mus musculus (Mouse).